Reading from the N-terminus, the 453-residue chain is Bifunctional protein GlmU (453 aa).

The interval M1–R231 is pyrophosphorylase. Residues L10 to G13, K24, Q77, G82 to T83, Y105 to D107, G143, E157, N172, and N229 contribute to the UDP-N-acetyl-alpha-D-glucosamine site. D107 contributes to the Mg(2+) binding site. N229 provides a ligand contact to Mg(2+). A linker region spans residues A232–A252. The tract at residues G253 to A453 is N-acetyltransferase. Residues R318 and K336 each contribute to the UDP-N-acetyl-alpha-D-glucosamine site. H348 serves as the catalytic Proton acceptor. UDP-N-acetyl-alpha-D-glucosamine is bound by residues Y351 and N362. Acetyl-CoA-binding positions include A365, N371–Y372, S390, S408, and R425.

In the N-terminal section; belongs to the N-acetylglucosamine-1-phosphate uridyltransferase family. The protein in the C-terminal section; belongs to the transferase hexapeptide repeat family. Homotrimer. Mg(2+) serves as cofactor.

It localises to the cytoplasm. It catalyses the reaction alpha-D-glucosamine 1-phosphate + acetyl-CoA = N-acetyl-alpha-D-glucosamine 1-phosphate + CoA + H(+). The catalysed reaction is N-acetyl-alpha-D-glucosamine 1-phosphate + UTP + H(+) = UDP-N-acetyl-alpha-D-glucosamine + diphosphate. It functions in the pathway nucleotide-sugar biosynthesis; UDP-N-acetyl-alpha-D-glucosamine biosynthesis; N-acetyl-alpha-D-glucosamine 1-phosphate from alpha-D-glucosamine 6-phosphate (route II): step 2/2. The protein operates within nucleotide-sugar biosynthesis; UDP-N-acetyl-alpha-D-glucosamine biosynthesis; UDP-N-acetyl-alpha-D-glucosamine from N-acetyl-alpha-D-glucosamine 1-phosphate: step 1/1. It participates in bacterial outer membrane biogenesis; LPS lipid A biosynthesis. Catalyzes the last two sequential reactions in the de novo biosynthetic pathway for UDP-N-acetylglucosamine (UDP-GlcNAc). The C-terminal domain catalyzes the transfer of acetyl group from acetyl coenzyme A to glucosamine-1-phosphate (GlcN-1-P) to produce N-acetylglucosamine-1-phosphate (GlcNAc-1-P), which is converted into UDP-GlcNAc by the transfer of uridine 5-monophosphate (from uridine 5-triphosphate), a reaction catalyzed by the N-terminal domain. This chain is Bifunctional protein GlmU, found in Rhizobium etli (strain CIAT 652).